The primary structure comprises 234 residues: N-(5'-phosphoribosyl)anthranilate isomerase (234 aa).

The tract at residues 211 to 234 (RAASSSPRPVDGESPAFQRSEKAG) is disordered.

This sequence belongs to the TrpF family.

It carries out the reaction N-(5-phospho-beta-D-ribosyl)anthranilate = 1-(2-carboxyphenylamino)-1-deoxy-D-ribulose 5-phosphate. The protein operates within amino-acid biosynthesis; L-tryptophan biosynthesis; L-tryptophan from chorismate: step 3/5. The polypeptide is N-(5'-phosphoribosyl)anthranilate isomerase (Afipia carboxidovorans (strain ATCC 49405 / DSM 1227 / KCTC 32145 / OM5) (Oligotropha carboxidovorans)).